The primary structure comprises 91 residues: Large ribosomal subunit protein bL31B (91 aa).

The protein belongs to the bacterial ribosomal protein bL31 family. Type B subfamily. Part of the 50S ribosomal subunit.

This is Large ribosomal subunit protein bL31B from Neisseria gonorrhoeae (strain ATCC 700825 / FA 1090).